The chain runs to 890 residues: Translation initiation factor IF-2 (890 aa).

The segment at 110-216 is disordered; sequence ISKPISKAPQ…KKPLIKTQDH (107 aa). Basic residues predominate over residues 135–148; the sequence is VPKRKGLVIIKKKR. Residues 184 to 199 show a composition bias toward basic and acidic residues; the sequence is KSYNEPKNKENDDIKK. The segment covering 200 to 210 has biased composition (basic residues); that stretch reads QKVKKEKKKPL. In terms of domain architecture, tr-type G spans 387 to 554; that stretch reads TRPPVVTIMG…NILLQAEILE (168 aa). Positions 396 to 403 are G1; sequence GHVDHGKT. 396–403 contacts GTP; that stretch reads GHVDHGKT. A G2 region spans residues 421–425; sequence GITQH. Residues 442–445 form a G3 region; that stretch reads DTPG. Residues 442 to 446 and 496 to 499 contribute to the GTP site; these read DTPGH and NKMD. Residues 496–499 form a G4 region; the sequence is NKMD. The interval 532 to 534 is G5; it reads SAR.

It belongs to the TRAFAC class translation factor GTPase superfamily. Classic translation factor GTPase family. IF-2 subfamily.

It is found in the cytoplasm. Functionally, one of the essential components for the initiation of protein synthesis. Protects formylmethionyl-tRNA from spontaneous hydrolysis and promotes its binding to the 30S ribosomal subunits. Also involved in the hydrolysis of GTP during the formation of the 70S ribosomal complex. This chain is Translation initiation factor IF-2, found in Aliarcobacter butzleri (strain RM4018) (Arcobacter butzleri).